The primary structure comprises 97 residues: MSDSLWHLYLLRTTSGMLYTGITTDVARRLTQHQAGKGAKALRGKGELALVFHCEAGDRSTALKLEYRVKQLSKQQKEKLVMNQPSSLVSLLDVRTD.

The GIY-YIG domain maps to 4–79 (SLWHLYLLRT…KQLSKQQKEK (76 aa)).

Belongs to the UPF0213 family.

In Yersinia enterocolitica serotype O:8 / biotype 1B (strain NCTC 13174 / 8081), this protein is UPF0213 protein YE0453.